Here is a 1168-residue protein sequence, read N- to C-terminus: Transcription-repair-coupling factor (1168 aa).

Residues 633 to 794 enclose the Helicase ATP-binding domain; that stretch reads DMQKSRPMDR…MLGVRDLSVI (162 aa). 646 to 653 lines the ATP pocket; sequence GDVGYGKT. The DEEQ box signature appears at 747 to 750; the sequence is DEEQ. The 162-residue stretch at 808-969 folds into the Helicase C-terminal domain; the sequence is VLEQNMSFIK…GFKIAMRDLN (162 aa).

This sequence in the N-terminal section; belongs to the UvrB family. The protein in the C-terminal section; belongs to the helicase family. RecG subfamily.

The protein resides in the cytoplasm. Its function is as follows. Couples transcription and DNA repair by recognizing RNA polymerase (RNAP) stalled at DNA lesions. Mediates ATP-dependent release of RNAP and its truncated transcript from the DNA, and recruitment of nucleotide excision repair machinery to the damaged site. In Staphylococcus aureus (strain MSSA476), this protein is Transcription-repair-coupling factor.